The primary structure comprises 3912 residues: Ubiquitin carboxyl-terminal hydrolase puf (3912 aa).

Disordered stretches follow at residues 101 to 172 (AQQQ…HKSH), 518 to 590 (NVTA…ISPE), 660 to 688 (DVPSSDEADGEADGDGEGELLADSDECSD), 851 to 878 (VVSGGKQHHSPKASQGSSTSGSTPVQPS), and 1491 to 1611 (SRRG…PALS). Basic and acidic residues predominate over residues 106-133 (EQQRDEASAQAEAKESSAPAEEPKKEEP). The span at 134 to 143 (SGSAGEEAQG) shows a compositional bias: low complexity. Residues 150–164 (KKPPVGPCTPPPPQT) are compositionally biased toward pro residues. The span at 522 to 532 (SSSDSGSIEGS) shows a compositional bias: low complexity. Residues 576–585 (ICDPTTEKGK) show a composition bias toward basic and acidic residues. The segment covering 660–687 (DVPSSDEADGEADGDGEGELLADSDECS) has biased composition (acidic residues). A compositionally biased stretch (polar residues) spans 862 to 876 (KASQGSSTSGSTPVQ). Residues 1511–1520 (VKKSSMGRRR) are compositionally biased toward basic residues. The span at 1550 to 1567 (TPSTGLQDVETEASSSSG) shows a compositional bias: polar residues. Residues 1583–1594 (KGETFEQEKERP) are compositionally biased toward basic and acidic residues. The span at 1600–1609 (PPSPTPPPPA) shows a compositional bias: pro residues. The 366-residue stretch at 2015–2380 (VGLTNLGATC…SAYMLFYERR (366 aa)) folds into the USP domain. The active-site Nucleophile is Cys-2024. Basic and acidic residues predominate over residues 2249–2263 (YKEERERRQKEKEGA). Positions 2249–2274 (YKEERERRQKEKEGADGSGDGNDNEK) are disordered. The active-site Proton acceptor is His-2305. Disordered stretches follow at residues 2391–2529 (ELLV…TSKA), 3322–3344 (QQSQSQTQTPQSPQQKEKQLQQQ), 3657–3776 (SERF…EERE), and 3800–3912 (ASVP…PTQI). Basic and acidic residues-rich tracts occupy residues 2402-2413 (VEEKSEAEEPTK) and 2433-2488 (EKDK…EKPT). Low complexity predominate over residues 2504-2523 (NCDNHQQNNNSNSKASNDQQ). A compositionally biased stretch (basic and acidic residues) spans 3657–3703 (SERFRKESERDPFPNKKQKRDSQKIKEKEHPQPESEKETSTENDKPS). Residues 3706 to 3721 (SMESSGNAEQATDSTK) show a composition bias toward polar residues. Positions 3741–3751 (SDDETELEDEL) are enriched in acidic residues. The segment covering 3766 to 3776 (TAQDRVNEERE) has biased composition (basic and acidic residues). Residues 3865–3877 (PKTSQTNGSQQNE) are compositionally biased toward polar residues. The segment covering 3878-3912 (SPPAATSADTAPANPSPAPAAAVASTSQAASPTQI) has biased composition (low complexity).

This sequence belongs to the peptidase C19 family. As to quaternary structure, interacts with Myc and ago.

Its subcellular location is the nucleus. It carries out the reaction Thiol-dependent hydrolysis of ester, thioester, amide, peptide and isopeptide bonds formed by the C-terminal Gly of ubiquitin (a 76-residue protein attached to proteins as an intracellular targeting signal).. In terms of biological role, ubiquitin hydrolase that can remove conjugated ubiquitin from target proteins and polyubiquitin chains. Essential for Myc-mediated cell growth and proliferation in developing eyes and wings. In the wing and eye, the deubiquitinating activity acts as an antagonist to the SCF E3 ubiquitin-protein ligase member archipelago (ago) to regulate Myc and CycE stability and thus control cell growth and proliferation. Also appears to regulate ago by modulating its induction by Myc. May also promote cell apoptosis in the wing imaginal disk, acting in an apoptotic pathway that appears to be largely independent of Myc. Required for preventing the activation of the immune deficiency (Imd) and Toll signaling cascades under unchallenged conditions. Also appears to be involved in modulating the differential expression of certain antimicrobial peptides (AMP) in response to infection by either Gram-positive or Gram-negative bacteria. Involved in the regulation of DNA damage repair pathways, including euchromatic site-specific double strand break (DSB) repair. In Drosophila melanogaster (Fruit fly), this protein is Ubiquitin carboxyl-terminal hydrolase puf.